Here is a 462-residue protein sequence, read N- to C-terminus: Argininosuccinate lyase (462 aa).

Belongs to the lyase 1 family. Argininosuccinate lyase subfamily.

The protein localises to the cytoplasm. The catalysed reaction is 2-(N(omega)-L-arginino)succinate = fumarate + L-arginine. Its pathway is amino-acid biosynthesis; L-arginine biosynthesis; L-arginine from L-ornithine and carbamoyl phosphate: step 3/3. In Prochlorococcus marinus (strain MIT 9211), this protein is Argininosuccinate lyase.